The following is a 1274-amino-acid chain: Enamelin (1274 aa).

An N-terminal signal peptide occupies residues 1-38; sequence MLLLQCRNPTSPPKPCGLVPNVKMSLLVFLGLLGVSAA. Residues 103–115 show a composition bias toward pro residues; it reads PVPNGWQQPPMPN. Disordered stretches follow at residues 103 to 413, 476 to 610, 668 to 700, 712 to 734, and 753 to 814; these read PVPN…VGAN, IGAN…NNPN, PFQSETKKPELKHGTHQPAYPKKIPSPTRKHFP, LPPLKEDYGRQDENLRHPSYGSR, and YIKS…EEMN. Residues 117 to 127 are compositionally biased toward polar residues; it reads PSKTDQTQETA. A compositionally biased stretch (low complexity) spans 128–142; that stretch reads KPNQTNPQEPQPQKQ. N-linked (GlcNAc...) asparagine glycosylation occurs at N130. Positions 143 to 158 are enriched in basic and acidic residues; it reads PLKEPPNEAARAKDDA. Positions 174-185 are enriched in pro residues; that stretch reads YPQPPWPIPQRG. A phosphoserine mark is found at S196 and S219. The segment covering 225–239 has biased composition (basic and acidic residues); it reads DYEKPKEKDPPKPED. Over residues 249–272 the composition is skewed to polar residues; sequence ASTNSTVPDANATQSIPEGGNDTS. Residues N252, N259, and N269 are each glycosylated (N-linked (GlcNAc...) asparagine). Residues 273 to 287 are compositionally biased toward low complexity; that stretch reads PIGNTGPGPNAGNNP. N-linked (GlcNAc...) asparagine glycosylation is present at N300. Over residues 318 to 330 the composition is skewed to low complexity; the sequence is PNIYENYPYPNYP. Polar residues-rich tracts occupy residues 331-344, 486-503, 522-549, and 565-574; these read SERQWQTTGTQGPR, SIGTNPAANKPSIGTNPA, TNPSSNQPFLRSNQASNKPFMRSNQASN, and VTVSHNMKTQ. The span at 575-587 shows a compositional bias: basic and acidic residues; it reads NPKEKSLGQKERT. Residues 588–598 show a composition bias toward polar residues; that stretch reads VTPTKDASNPW. The span at 715–727 shows a compositional bias: basic and acidic residues; the sequence is LKEDYGRQDENLR. Over residues 753–766 the composition is skewed to polar residues; the sequence is YIKSNPWDKSSPST. The span at 787–801 shows a compositional bias: acidic residues; the sequence is QYNEEDPIDPNEDES. A glycan (N-linked (GlcNAc...) asparagine) is linked at N1066. 2 disordered regions span residues 1071–1097 and 1109–1128; these read KLTAESPNPSPFGDGVPTVRKNTPYSG and SEASSSQPKNTPCLKSDLGG.

Post-translationally, phosphorylated by FAM20C in vitro. As to expression, expressed in developing teeth.

It is found in the secreted. The protein resides in the extracellular space. The protein localises to the extracellular matrix. Involved in the mineralization and structural organization of enamel. Involved in the extension of enamel during the secretory stage of dental enamel formation. The sequence is that of Enamelin (Enam) from Mus musculus (Mouse).